The chain runs to 350 residues: Erythronate-4-phosphate dehydrogenase (350 aa).

Substrate-binding residues include S45 and T66. Residues 124 to 125, D144, 203 to 205, and D226 contribute to the NAD(+) site; these read QV and ASR. The active site involves R205. The active site involves E231. The active-site Proton donor is H248. An NAD(+)-binding site is contributed by G251.

It belongs to the D-isomer specific 2-hydroxyacid dehydrogenase family. PdxB subfamily. Homodimer.

The protein localises to the cytoplasm. The catalysed reaction is 4-phospho-D-erythronate + NAD(+) = (R)-3-hydroxy-2-oxo-4-phosphooxybutanoate + NADH + H(+). It functions in the pathway cofactor biosynthesis; pyridoxine 5'-phosphate biosynthesis; pyridoxine 5'-phosphate from D-erythrose 4-phosphate: step 2/5. In terms of biological role, catalyzes the oxidation of erythronate-4-phosphate to 3-hydroxy-2-oxo-4-phosphonooxybutanoate. The chain is Erythronate-4-phosphate dehydrogenase from Legionella pneumophila subsp. pneumophila (strain Philadelphia 1 / ATCC 33152 / DSM 7513).